The chain runs to 337 residues: Schlafen family member 1 (337 aa).

Residues 147–166 (AGGRSPSARPSDRPGDDTQE) form a disordered region. Positions 156 to 166 (PSDRPGDDTQE) are enriched in basic and acidic residues.

The protein belongs to the Schlafen family. In terms of assembly, interacts with DNAJB6; promoting nuclear translocation and ability to promote cell-cycle arrest. In terms of tissue distribution, mainly expressed in the thymus, lymph node and spleen. Specifically expressed in T-lineage cells, but not in B-cells. Strongly up-regulated during the differentiation from CD4(+)CD8(+) double-positive (DP) to CD4(+) or CD8(+) single-positive (SP) thymocytes. Highly expressed in quiescent single-positive thymocytes and T-cells. The expression substantially decreases after TCR (T-cell receptor)-mediated activation.

It localises to the cytoplasm. The protein localises to the nucleus. Functionally, protein expressed in resting T-cells, which is required for maintaining T-cells in the quiescent state. Acts by promoting cell-cycle arrest of T-cells through inhibiting the expression of cyclin-D1 (CCND1). The sequence is that of Schlafen family member 1 from Mus musculus (Mouse).